Reading from the N-terminus, the 185-residue chain is Hypoxanthine/guanine phosphoribosyltransferase (185 aa).

Belongs to the purine/pyrimidine phosphoribosyltransferase family. Archaeal HPRT subfamily. As to quaternary structure, homodimer.

The protein resides in the cytoplasm. It carries out the reaction IMP + diphosphate = hypoxanthine + 5-phospho-alpha-D-ribose 1-diphosphate. The catalysed reaction is GMP + diphosphate = guanine + 5-phospho-alpha-D-ribose 1-diphosphate. It functions in the pathway purine metabolism; IMP biosynthesis via salvage pathway; IMP from hypoxanthine: step 1/1. Functionally, catalyzes a salvage reaction resulting in the formation of IMP that is energically less costly than de novo synthesis. The polypeptide is Hypoxanthine/guanine phosphoribosyltransferase (hpt) (Methanococcus maripaludis (strain DSM 14266 / JCM 13030 / NBRC 101832 / S2 / LL)).